The following is a 314-amino-acid chain: Epithelial-stromal interaction protein 1 (314 aa).

4 disordered regions span residues 1-72 (MYPR…PNET), 200-219 (NRSA…WKLP), 225-267 (PSRA…HQEE), and 292-314 (SQPG…GWGI). The segment covering 43-58 (AEPKGPKLERQGHGDQ) has biased composition (basic and acidic residues). A coiled-coil region spans residues 71 to 180 (ETRRQKIQRI…QEDIRRATLR (110 aa)). A compositionally biased stretch (basic and acidic residues) spans 232–267 (AHKDSPQKEDNQKLQKTRDGHQKNKLLETKGQHQEE). Positions 305-314 (NMNSTDGWGI) are enriched in polar residues.

Functionally, plays a role in M1 macrophage polarization and is required for the proper regulation of gene expression during M1 versus M2 macrophage differentiation. Might play a role in RELA/p65 and STAT1 phosphorylation and nuclear localization upon activation of macrophages. In Rattus norvegicus (Rat), this protein is Epithelial-stromal interaction protein 1 (Epsti1).